We begin with the raw amino-acid sequence, 447 residues long: Enolase (447 aa).

A (2R)-2-phosphoglycerate-binding site is contributed by Gln168. Glu210 (proton donor) is an active-site residue. 3 residues coordinate Mg(2+): Asp247, Glu292, and Asp319. Residues Lys344, Arg373, Ser374, and Lys395 each coordinate (2R)-2-phosphoglycerate. Residue Lys344 is the Proton acceptor of the active site.

It belongs to the enolase family. In terms of assembly, component of the RNA degradosome, a multiprotein complex involved in RNA processing and mRNA degradation. It depends on Mg(2+) as a cofactor.

Its subcellular location is the cytoplasm. The protein localises to the secreted. The protein resides in the cell surface. It catalyses the reaction (2R)-2-phosphoglycerate = phosphoenolpyruvate + H2O. The protein operates within carbohydrate degradation; glycolysis; pyruvate from D-glyceraldehyde 3-phosphate: step 4/5. Its function is as follows. Catalyzes the reversible conversion of 2-phosphoglycerate (2-PG) into phosphoenolpyruvate (PEP). It is essential for the degradation of carbohydrates via glycolysis. This Blochmanniella floridana protein is Enolase.